Here is a 440-residue protein sequence, read N- to C-terminus: Chaperone SurA (440 aa).

The N-terminal stretch at 1–25 (MGTKLSSRSPFSLPFLTLLAGMAIA) is a signal peptide. 2 consecutive PpiC domains span residues 182-283 (SDEY…KLVE) and 294-392 (IDQT…QVIE).

It localises to the periplasm. The enzyme catalyses [protein]-peptidylproline (omega=180) = [protein]-peptidylproline (omega=0). Functionally, chaperone involved in the correct folding and assembly of outer membrane proteins. Recognizes specific patterns of aromatic residues and the orientation of their side chains, which are found more frequently in integral outer membrane proteins. May act in both early periplasmic and late outer membrane-associated steps of protein maturation. In Nitrosospira multiformis (strain ATCC 25196 / NCIMB 11849 / C 71), this protein is Chaperone SurA.